We begin with the raw amino-acid sequence, 76 residues long: Large ribosomal subunit protein bL31 (76 aa).

Positions 16, 18, 38, and 41 each coordinate Zn(2+).

This sequence belongs to the bacterial ribosomal protein bL31 family. Type A subfamily. Part of the 50S ribosomal subunit. Zn(2+) is required as a cofactor.

Functionally, binds the 23S rRNA. In Nocardia farcinica (strain IFM 10152), this protein is Large ribosomal subunit protein bL31.